The sequence spans 167 residues: Large ribosomal subunit protein uL10 (167 aa).

Belongs to the universal ribosomal protein uL10 family. Part of the ribosomal stalk of the 50S ribosomal subunit. The N-terminus interacts with L11 and the large rRNA to form the base of the stalk. The C-terminus forms an elongated spine to which L12 dimers bind in a sequential fashion forming a multimeric L10(L12)X complex.

Functionally, forms part of the ribosomal stalk, playing a central role in the interaction of the ribosome with GTP-bound translation factors. This Alkaliphilus oremlandii (strain OhILAs) (Clostridium oremlandii (strain OhILAs)) protein is Large ribosomal subunit protein uL10.